Reading from the N-terminus, the 362-residue chain is Peptide chain release factor 1 (362 aa).

Glutamine 237 carries the N5-methylglutamine modification.

Belongs to the prokaryotic/mitochondrial release factor family. Methylated by PrmC. Methylation increases the termination efficiency of RF1.

Its subcellular location is the cytoplasm. In terms of biological role, peptide chain release factor 1 directs the termination of translation in response to the peptide chain termination codons UAG and UAA. The polypeptide is Peptide chain release factor 1 (Aliivibrio fischeri (strain ATCC 700601 / ES114) (Vibrio fischeri)).